Reading from the N-terminus, the 454-residue chain is GTPase Der (454 aa).

2 consecutive EngA-type G domains span residues 4–167 (AIVA…SEDK) and 188–363 (LELA…ASWQ). GTP contacts are provided by residues 10–17 (GKPNVGKS), 56–60 (DTPGL), 121–124 (NKTE), 194–201 (GRPNCGKS), 241–245 (DTAGV), and 306–309 (NKWD). The region spanning 364–450 (KRVTTGTLNQ…PVRLSFVKGK (87 aa)) is the KH-like domain.

Belongs to the TRAFAC class TrmE-Era-EngA-EngB-Septin-like GTPase superfamily. EngA (Der) GTPase family. As to quaternary structure, associates with the 50S ribosomal subunit.

GTPase that plays an essential role in the late steps of ribosome biogenesis. The polypeptide is GTPase Der (Orientia tsutsugamushi (strain Ikeda) (Rickettsia tsutsugamushi)).